The sequence spans 129 residues: Phosphoribosyl-AMP cyclohydrolase (129 aa).

D76 contributes to the Mg(2+) binding site. C77 provides a ligand contact to Zn(2+). Mg(2+) contacts are provided by D78 and D80. 2 residues coordinate Zn(2+): C97 and C104.

Belongs to the PRA-CH family. Homodimer. The cofactor is Mg(2+). Zn(2+) serves as cofactor.

It is found in the cytoplasm. It carries out the reaction 1-(5-phospho-beta-D-ribosyl)-5'-AMP + H2O = 1-(5-phospho-beta-D-ribosyl)-5-[(5-phospho-beta-D-ribosylamino)methylideneamino]imidazole-4-carboxamide. Its pathway is amino-acid biosynthesis; L-histidine biosynthesis; L-histidine from 5-phospho-alpha-D-ribose 1-diphosphate: step 3/9. Functionally, catalyzes the hydrolysis of the adenine ring of phosphoribosyl-AMP. The chain is Phosphoribosyl-AMP cyclohydrolase from Polaromonas naphthalenivorans (strain CJ2).